Reading from the N-terminus, the 230-residue chain is Ribonuclease 3 (230 aa).

In terms of domain architecture, RNase III spans 5 to 125; that stretch reads YSRFYNILGY…VIGAIYLDSD (121 aa). A Mg(2+)-binding site is contributed by glutamate 40. Aspartate 44 is a catalytic residue. The Mg(2+) site is built by aspartate 111 and glutamate 114. Glutamate 114 is a catalytic residue. Residues 153-223 enclose the DRBM domain; sequence DSKSKLQEIL…AEKMIEMLSQ (71 aa).

Belongs to the ribonuclease III family. As to quaternary structure, homodimer. Mg(2+) is required as a cofactor.

The protein localises to the cytoplasm. The catalysed reaction is Endonucleolytic cleavage to 5'-phosphomonoester.. Digests double-stranded RNA. Involved in the processing of primary rRNA transcript to yield the immediate precursors to the large and small rRNAs (23S and 16S). Processes some mRNAs, and tRNAs when they are encoded in the rRNA operon. Processes pre-crRNA and tracrRNA of type II CRISPR loci if present in the organism. This is Ribonuclease 3 from Francisella tularensis subsp. tularensis (strain WY96-3418).